A 984-amino-acid chain; its full sequence is MORC family CW-type zinc finger protein 1 (984 aa).

Residues 284–353 (AFKDEVKKAE…RELKTARTLS (70 aa)) are a coiled coil. The CW-type zinc finger occupies 477–531 (AMGIPFIIQCDLCLKWRVLPSSTNYQEKEFFDIWICANNPNRLENSCHQVECLPS). Residues Cys486, Cys489, Cys512, and Cys523 each contribute to the Zn(2+) site. 2 coiled-coil regions span residues 737–761 (DVSLKQEKKEIPLLNQEKQELCNDV) and 900–934 (EISLGQCENKRKISEDKLKNLRIKLALLLQKLQLG).

It is found in the nucleus. Its function is as follows. Required for spermatogenesis. Essential for de novo DNA methylation and silencing of transposable elements in the male embryonic germ cells. This is MORC family CW-type zinc finger protein 1 from Homo sapiens (Human).